A 513-amino-acid chain; its full sequence is Maturase K (513 aa).

The protein belongs to the intron maturase 2 family. MatK subfamily.

The protein localises to the plastid. It is found in the chloroplast. Its function is as follows. Usually encoded in the trnK tRNA gene intron. Probably assists in splicing its own and other chloroplast group II introns. The polypeptide is Maturase K (Danthonia spicata (Poverty oatgrass)).